The sequence spans 104 residues: N(4)-acetylcytidine amidohydrolase (104 aa).

The region spanning 6–101 is the ASCH domain; it reads TFFERFEHDI…EQLYMIRFKV (96 aa). Residue lysine 20 is the Proton acceptor of the active site. Threonine 23 functions as the Nucleophile in the catalytic mechanism. The Proton donor role is filled by glutamate 73.

This sequence belongs to the N(4)-acetylcytidine amidohydrolase family.

It carries out the reaction N(4)-acetylcytidine + H2O = cytidine + acetate + H(+). The enzyme catalyses N(4)-acetyl-2'-deoxycytidine + H2O = 2'-deoxycytidine + acetate + H(+). The catalysed reaction is N(4)-acetylcytosine + H2O = cytosine + acetate + H(+). In terms of biological role, catalyzes the hydrolysis of N(4)-acetylcytidine (ac4C). In Shewanella oneidensis (strain ATCC 700550 / JCM 31522 / CIP 106686 / LMG 19005 / NCIMB 14063 / MR-1), this protein is N(4)-acetylcytidine amidohydrolase.